Reading from the N-terminus, the 260-residue chain is Indole-3-glycerol phosphate synthase (260 aa).

This sequence belongs to the TrpC family.

The enzyme catalyses 1-(2-carboxyphenylamino)-1-deoxy-D-ribulose 5-phosphate + H(+) = (1S,2R)-1-C-(indol-3-yl)glycerol 3-phosphate + CO2 + H2O. It functions in the pathway amino-acid biosynthesis; L-tryptophan biosynthesis; L-tryptophan from chorismate: step 4/5. The chain is Indole-3-glycerol phosphate synthase from Neisseria gonorrhoeae (strain NCCP11945).